We begin with the raw amino-acid sequence, 305 residues long: Heterogeneous nuclear ribonucleoprotein A0 (305 aa).

M1 bears the N-acetylmethionine mark. The region spanning 7-86 (CKLFIGGLNV…VELKRAVSRE (80 aa)) is the RRM 1 domain. Residue S68 is modified to Phosphoserine. A Glycyl lysine isopeptide (Lys-Gly) (interchain with G-Cter in SUMO2) cross-link involves residue K80. S84 is subject to Phosphoserine; by MAPKAPK2. Glycyl lysine isopeptide (Lys-Gly) (interchain with G-Cter in SUMO2) cross-links involve residues K96, K98, K99, and K106. The RRM 2 domain maps to 98–175 (KKLFVGGLKG…HRVEVKKAVP (78 aa)). K133 carries the N6-acetyllysine modification. R139 carries the post-translational modification Omega-N-methylarginine. Glycyl lysine isopeptide (Lys-Gly) (interchain with G-Cter in SUMO2) cross-links involve residues K154, K159, K172, and K176. 2 disordered regions span residues 178 to 211 (DIHAGGGGARAARGGRGGGRGRGGGGGGGGRDQN) and 265 to 305 (QSSY…GGSF). Composition is skewed to gly residues over residues 181–211 (AGGGGARAARGGRGGGRGRGGGGGGGGRDQN) and 272–284 (KSGGGGGGGGSWG). Omega-N-methylarginine is present on R286. A compositionally biased stretch (gly residues) spans 292–305 (YRGGYGGGYGGGSF). Asymmetric dimethylarginine; alternate is present on R293. Position 293 is a dimethylated arginine; alternate (R293). R293 carries the omega-N-methylarginine; alternate modification.

Post-translationally, phosphorylated at Ser-84 by MAPKAPK2 in response to LPS treatment, promoting stabilization of GADD45A mRNA. In terms of processing, arg-293 is dimethylated, probably to asymmetric dimethylarginine.

The protein localises to the nucleus. MRNA-binding component of ribonucleosomes. Specifically binds AU-rich element (ARE)-containing mRNAs. Involved in post-transcriptional regulation of cytokines mRNAs. The chain is Heterogeneous nuclear ribonucleoprotein A0 (Hnrnpa0) from Mus musculus (Mouse).